Here is a 321-residue protein sequence, read N- to C-terminus: MSYHKSSGTILMVPLFMLLISVNYFMSCNAQLSTTFYDTTCPTALSTIRTSIRSSVSSNRRNAALVIRLLFHDCFVQGCDASLLLSGAGSERASPANDGVLGYEVIDAAKAAVERVCPGVVSCADILAVAARDASVAVGGPSWTVRLGRRDSTTSNAAQAATDLPRGNMVLSQLISNFANKGLNTREMVALSGSHTLGQARCIRFRGRIYNSTLRIEPNFNRSLSQACPPTGNDATLRPLDLVTPNSFDNNYYRNLVTSRGLLISDQVLFNADSTDSIVTEYVNNPATFAADFAAAMVKMSEIGVVTGTSGIVRTLCGNPS.

A signal peptide spans 1-30 (MSYHKSSGTILMVPLFMLLISVNYFMSCNA). Glutamine 31 is subject to Pyrrolidone carboxylic acid. 4 disulfides stabilise this stretch: cysteine 41–cysteine 117, cysteine 74–cysteine 79, cysteine 123–cysteine 317, and cysteine 202–cysteine 228. The active-site Proton acceptor is histidine 72. Ca(2+) contacts are provided by aspartate 73, valine 76, glycine 78, aspartate 80, and serine 82. Proline 165 is a binding site for substrate. Residue histidine 195 participates in heme b binding. Threonine 196 provides a ligand contact to Ca(2+). Residues asparagine 211 and asparagine 221 are each glycosylated (N-linked (GlcNAc...) asparagine). Positions 241, 244, and 249 each coordinate Ca(2+).

This sequence belongs to the peroxidase family. Classical plant (class III) peroxidase subfamily. The cofactor is heme b. It depends on Ca(2+) as a cofactor. Post-translationally, N-glycosylated. In terms of tissue distribution, expressed in tracheary elements, roots, young and old hypocotyls, and stems in the partially glycosylated form and in roots and young hypocotyls in the fully glycosylated form. None of the isoforms is significantly expressed in leaves or cotyledons.

Its subcellular location is the secreted. It catalyses the reaction 2 a phenolic donor + H2O2 = 2 a phenolic radical donor + 2 H2O. Removal of H(2)O(2), oxidation of toxic reductants, biosynthesis and degradation of lignin, suberization, auxin catabolism, response to environmental stresses such as wounding, pathogen attack and oxidative stress. These functions might be dependent on each isozyme/isoform in each plant tissue. Involved in the synthesis of highly polymerized lignins. The protein is Basic peroxidase (POD1) of Zinnia elegans (Garden zinnia).